Here is a 269-residue protein sequence, read N- to C-terminus: JmjC domain-containing protein 8 (269 aa).

The first 24 residues, 1 to 24, serve as a signal peptide directing secretion; it reads MAAAGRRGLLLLFVLWMMVTVILP. Residues Asn-135, Asn-145, and Asn-214 are each glycosylated (N-linked (GlcNAc...) asparagine). In terms of domain architecture, JmjC spans 136-269; that stretch reads DTLYFFGDNN…TSVFISTFLG (134 aa).

Oligomer. Dimer. Interacts with PKM; regulates angiogenesis and metabolism. In terms of processing, N-glycosylated.

It localises to the endoplasmic reticulum lumen. The protein resides in the cytoplasm. Functions as a positive regulator of TNF-induced NF-kappaB signaling. Regulates angiogenesis and cellular metabolism through interaction with PKM. This Mus musculus (Mouse) protein is JmjC domain-containing protein 8.